We begin with the raw amino-acid sequence, 88 residues long: Small ribosomal subunit protein bS16 (88 aa).

The protein belongs to the bacterial ribosomal protein bS16 family.

The sequence is that of Small ribosomal subunit protein bS16 from Leptospira interrogans serogroup Icterohaemorrhagiae serovar Lai (strain 56601).